The sequence spans 389 residues: S-adenosylmethionine synthase (389 aa).

Histidine 17 is an ATP binding site. Position 19 (aspartate 19) interacts with Mg(2+). Glutamate 45 contacts K(+). L-methionine is bound by residues glutamate 58 and glutamine 102. The segment at 102 to 112 (QSADIAQGVDA) is flexible loop. ATP contacts are provided by residues 167–169 (DAK), aspartate 241, 247–248 (RK), alanine 264, and lysine 268. Aspartate 241 contributes to the L-methionine binding site. Residue lysine 272 participates in L-methionine binding.

It belongs to the AdoMet synthase family. Homotetramer; dimer of dimers. The cofactor is Mg(2+). K(+) serves as cofactor.

The protein resides in the cytoplasm. It catalyses the reaction L-methionine + ATP + H2O = S-adenosyl-L-methionine + phosphate + diphosphate. The protein operates within amino-acid biosynthesis; S-adenosyl-L-methionine biosynthesis; S-adenosyl-L-methionine from L-methionine: step 1/1. In terms of biological role, catalyzes the formation of S-adenosylmethionine (AdoMet) from methionine and ATP. The overall synthetic reaction is composed of two sequential steps, AdoMet formation and the subsequent tripolyphosphate hydrolysis which occurs prior to release of AdoMet from the enzyme. The sequence is that of S-adenosylmethionine synthase from Parvibaculum lavamentivorans (strain DS-1 / DSM 13023 / NCIMB 13966).